Reading from the N-terminus, the 1196-residue chain is DNA-directed RNA polymerase subunit beta (1196 aa).

This sequence belongs to the RNA polymerase beta chain family. As to quaternary structure, the RNAP catalytic core consists of 2 alpha, 1 beta, 1 beta' and 1 omega subunit. When a sigma factor is associated with the core the holoenzyme is formed, which can initiate transcription.

The enzyme catalyses RNA(n) + a ribonucleoside 5'-triphosphate = RNA(n+1) + diphosphate. In terms of biological role, DNA-dependent RNA polymerase catalyzes the transcription of DNA into RNA using the four ribonucleoside triphosphates as substrates. This chain is DNA-directed RNA polymerase subunit beta, found in Lactococcus lactis subsp. lactis (strain IL1403) (Streptococcus lactis).